We begin with the raw amino-acid sequence, 1061 residues long: Transmembrane protease serine 9 (1061 aa).

Over 3–31 (PAAPDLQPVPEVTKGVPVPTPDSGCCRAA) the chain is Cytoplasmic. Residues 32–52 (VTTVVAISVASLTLGVLSAFL) form a helical membrane-spanning segment. Topologically, residues 53 to 1061 (SAQGVQVEHT…LGWIGQNIRE (1009 aa)) are extracellular. In terms of domain architecture, LDL-receptor class A spans 155 to 192 (HCPGNAFSCQNSQCVSKENPECDDRVDCSDGSDEAQCD). Disulfide bonds link C156–C168, C163–C182, C176–C191, and C230–C246. In terms of domain architecture, Peptidase S1 1 spans 205–438 (IVGGAEAAPG…LRDWILEVTS (234 aa)). Catalysis depends on charge relay system residues H245 and D294. 3 cysteine pairs are disulfide-bonded: C328-C395, C360-C374, and C385-C414. The active-site Charge relay system is S389. The tract at residues 443 to 499 (PVVPTEAPAPITPSTPWPTSPESRVPNTTAKPTVAPTPAPLHPSTAAKPQECGARPA) is disordered. The span at 452-461 (PITPSTPWPT) shows a compositional bias: pro residues. The segment covering 462–476 (SPESRVPNTTAKPTV) has biased composition (low complexity). A glycan (N-linked (GlcNAc...) asparagine) is linked at N469. The 233-residue stretch at 506–738 (IVGGISAVSG…LKDWILKAMS (233 aa)) folds into the Peptidase S1 2 domain. A disulfide bond links C531 and C547. Residue H546 is the Charge relay system of the active site. A glycan (N-linked (GlcNAc...) asparagine) is linked at N549. Catalysis depends on D594, which acts as the Charge relay system. Cystine bridges form between C628–C695, C660–C674, and C685–C714. 2 N-linked (GlcNAc...) asparagine glycosylation sites follow: N640 and N665. Catalysis depends on S689, which acts as the Charge relay system. Over residues 740–752 (DPSSTAHPHTSST) the composition is skewed to low complexity. Disordered stretches follow at residues 740 to 771 (DPSS…IPEA) and 790 to 810 (LNTT…APGT). The N-linked (GlcNAc...) asparagine glycan is linked to N791. The segment covering 792–808 (TTLSARSTTTRRQTPAP) has biased composition (low complexity). The 231-residue stretch at 830-1060 (IVGGSAASLG…VLGWIGQNIR (231 aa)) folds into the Peptidase S1 3 domain. 4 disulfides stabilise this stretch: C856-C872, C951-C1017, C982-C996, and C1007-C1036.

This sequence belongs to the peptidase S1 family. In terms of processing, proteolytically cleaved to generate 3 independent serine protease chains. The cleaved chains may remain attached to the membrane thanks to disulfide bonds. It is unclear whether cleavage always takes place.

It is found in the cell membrane. Inhibited by serine protease inhibitors PMSF and 4-(2-aminoethyl)benzenesulfonyl fluoride, but not by EDTA. Serase-1 and serase-2 are serine proteases that hydrolyze the peptides N-t-Boc-Gln-Ala-Arg-AMC and N-t-Boc-Gln-Gly-Arg-AMC. In contrast, N-t-Boc-Ala-Phe-Lys-AMC and N-t-Boc-Ala-Pro-Ala-AMC are not significantly hydrolyzed. The chain is Transmembrane protease serine 9 (Tmprss9) from Rattus norvegicus (Rat).